A 385-amino-acid polypeptide reads, in one-letter code: Cytochrome b (385 aa).

4 helical membrane-spanning segments follow: residues 32 to 52, 76 to 98, 113 to 133, and 179 to 199; these read FGSL…TLAM, WLVR…LHIG, TWAI…LGYV, and FFAL…MHLI. Residues His-82 and His-96 each coordinate heme b. Positions 183 and 197 each coordinate heme b. His-202 is an a ubiquinone binding site. Helical transmembrane passes span 226–246, 290–310, 322–342, and 349–369; these read FIFK…IFVF, LLGV…PITD, LSKV…QIGA, and FIEL…VIVP.

It belongs to the cytochrome b family. In terms of assembly, fungal cytochrome b-c1 complex contains 10 subunits; 3 respiratory subunits, 2 core proteins and 5 low-molecular weight proteins. Cytochrome b-c1 complex is a homodimer. Requires heme b as cofactor.

Its subcellular location is the mitochondrion inner membrane. Component of the ubiquinol-cytochrome c reductase complex (complex III or cytochrome b-c1 complex) that is part of the mitochondrial respiratory chain. The b-c1 complex mediates electron transfer from ubiquinol to cytochrome c. Contributes to the generation of a proton gradient across the mitochondrial membrane that is then used for ATP synthesis. The chain is Cytochrome b (cob) from Aspergillus tubingensis.